Consider the following 594-residue polypeptide: Beta-fructofuranosidase, insoluble isoenzyme CWINV3 (594 aa).

Positions 1–28 are cleaved as a signal peptide; sequence MAKLNRSNIGLSLLLSMFLANFITDLEA. Substrate-binding positions include 50 to 53, glutamine 69, tryptophan 77, and 113 to 114; these read WMND and WS. Aspartate 53 is a catalytic residue. Asparagine 147 is a glycosylation site (N-linked (GlcNAc...) asparagine). 179 to 180 provides a ligand contact to substrate; it reads RD. The N-linked (GlcNAc...) asparagine glycan is linked to asparagine 217. Substrate is bound at residue glutamate 235. Residues asparagine 297 and asparagine 329 are each glycosylated (N-linked (GlcNAc...) asparagine). Cysteine 428 and cysteine 480 are oxidised to a cystine.

It belongs to the glycosyl hydrolase 32 family. As to expression, expressed in seedlings, leaves, flowers, and seeds.

Its subcellular location is the secreted. It is found in the extracellular space. The protein localises to the apoplast. The protein resides in the cell wall. It catalyses the reaction Hydrolysis of terminal, non-reducing (2-&gt;1)- and (2-&gt;6)-linked beta-D-fructofuranose residues in fructans.. 6-fructan exohydrolase that can use phlein, levan, neokestose, levanbiose, 6-kestose, and 1-kestose as substrates. This is Beta-fructofuranosidase, insoluble isoenzyme CWINV3 (CWINV3) from Arabidopsis thaliana (Mouse-ear cress).